The following is a 414-amino-acid chain: Nuclear pore complex-interacting protein family member B7 (414 aa).

The first 18 residues, 1 to 18 (MRLRFWLLIWLLLGFISH), serve as a signal peptide directing secretion. N-linked (GlcNAc...) asparagine glycosylation is present at Asn111. Disordered regions lie at residues 242–262 (RMGR…NSLS) and 335–402 (SPLP…LRTR). Residues 252–262 (QQHSITDNSLS) are compositionally biased toward polar residues. Basic and acidic residues predominate over residues 356–384 (EVEKPPKPKRWRVDEVEQSPKPKRQREAE). Residues 390–402 (KPKRRRLSKLRTR) show a composition bias toward basic residues.

It belongs to the NPIP family.

The protein localises to the secreted. The polypeptide is Nuclear pore complex-interacting protein family member B7 (NPIPB7) (Homo sapiens (Human)).